A 215-amino-acid chain; its full sequence is MGVRAQQKEKTRRSLVEAAFSQLSAERSFASLSLREVAREAGIAPTSFYRHFRDVDELGLTMVDESGLMLRQLMRQARQRIAKGGSVIRTSVSTFMEFIGNNPNAFRLLLRERSGTSAAFRAAVAREIQHFIAELADYLELENHMPRAFTEAQAEAMVTIVFSAGAEALDVGVEQRRQLEERLVLQLRMISKGAYYWYRREQEKTTIIPGNVKDE.

The 61-residue stretch at 10 to 70 folds into the HTH tetR-type domain; that stretch reads KTRRSLVEAA…TMVDESGLML (61 aa). A DNA-binding region (H-T-H motif) is located at residues 33-52; sequence SLREVAREAGIAPTSFYRHF.

Homodimer.

It is found in the cytoplasm. Functionally, represses the transcription of fabB, involved in unsaturated fatty acid (UFA) biosynthesis. By controlling UFA production, FabR directly influences the physical properties of the membrane bilayer. The protein is HTH-type transcriptional repressor FabR of Escherichia coli O1:K1 / APEC.